Consider the following 171-residue polypeptide: Ribulose bisphosphate carboxylase small subunit, chloroplastic (171 aa).

A chloroplast-targeting transit peptide spans methionine 1–arginine 50.

This sequence belongs to the RuBisCO small chain family. As to quaternary structure, heterohexadecamer of 8 large and 8 small subunits.

Its subcellular location is the plastid. The protein localises to the chloroplast. Functionally, ruBisCO catalyzes two reactions: the carboxylation of D-ribulose 1,5-bisphosphate, the primary event in carbon dioxide fixation, as well as the oxidative fragmentation of the pentose substrate. Both reactions occur simultaneously and in competition at the same active site. Although the small subunit is not catalytic it is essential for maximal activity. This is Ribulose bisphosphate carboxylase small subunit, chloroplastic from Pinus thunbergii (Japanese black pine).